The sequence spans 278 residues: Sulfur carrier protein FdhD (278 aa).

Residue C121 is the Cysteine persulfide intermediate of the active site. 260-265 (FCKPGR) contributes to the Mo-bis(molybdopterin guanine dinucleotide) binding site.

Belongs to the FdhD family.

Its subcellular location is the cytoplasm. In terms of biological role, required for formate dehydrogenase (FDH) activity. Acts as a sulfur carrier protein that transfers sulfur from IscS to the molybdenum cofactor prior to its insertion into FDH. This Klebsiella pneumoniae subsp. pneumoniae (strain ATCC 700721 / MGH 78578) protein is Sulfur carrier protein FdhD.